Consider the following 173-residue polypeptide: Crossover junction endodeoxyribonuclease RuvC (173 aa).

Active-site residues include Asp-8, Glu-67, and Asp-139. Asp-8, Glu-67, and Asp-139 together coordinate Mg(2+).

Belongs to the RuvC family. Homodimer which binds Holliday junction (HJ) DNA. The HJ becomes 2-fold symmetrical on binding to RuvC with unstacked arms; it has a different conformation from HJ DNA in complex with RuvA. In the full resolvosome a probable DNA-RuvA(4)-RuvB(12)-RuvC(2) complex forms which resolves the HJ. The cofactor is Mg(2+).

It localises to the cytoplasm. It carries out the reaction Endonucleolytic cleavage at a junction such as a reciprocal single-stranded crossover between two homologous DNA duplexes (Holliday junction).. Functionally, the RuvA-RuvB-RuvC complex processes Holliday junction (HJ) DNA during genetic recombination and DNA repair. Endonuclease that resolves HJ intermediates. Cleaves cruciform DNA by making single-stranded nicks across the HJ at symmetrical positions within the homologous arms, yielding a 5'-phosphate and a 3'-hydroxyl group; requires a central core of homology in the junction. The consensus cleavage sequence is 5'-(A/T)TT(C/G)-3'. Cleavage occurs on the 3'-side of the TT dinucleotide at the point of strand exchange. HJ branch migration catalyzed by RuvA-RuvB allows RuvC to scan DNA until it finds its consensus sequence, where it cleaves and resolves the cruciform DNA. This chain is Crossover junction endodeoxyribonuclease RuvC, found in Edwardsiella ictaluri (strain 93-146).